A 181-amino-acid polypeptide reads, in one-letter code: Mating-type M-specific polypeptide Mc (181 aa).

Residues 103-171 constitute a DNA-binding region (HMG box); it reads TPRPPNAFIL…QHQKMYPGYK (69 aa).

The protein localises to the nucleus. Functionally, mating type proteins are sequence specific DNA-binding proteins that act as master switches in yeast differentiation by controlling gene expression in a cell type-specific fashion. Positive regulator of MFM genes. The HMG box recognizes the DNA sequence 5'-AACAAAG-3'. Required for conjugation and efficient meiosis. The polypeptide is Mating-type M-specific polypeptide Mc (matMc) (Schizosaccharomyces kambucha (Fission yeast)).